The chain runs to 395 residues: Digeranylgeranylglycerophospholipid reductase (395 aa).

A15, D34, C45, A46, G48, R97, A121, D276, and G288 together coordinate FAD. A 2,3-bis-O-(geranylgeranyl)-sn-glycerol 1-phospholipid-binding residues include R329 and G365.

This sequence belongs to the geranylgeranyl reductase family. DGGGPL reductase subfamily. FAD serves as cofactor.

The enzyme catalyses a 2,3-bis-O-phytanyl-sn-glycerol 1-phospholipid + 8 A = a 2,3-bis-O-(geranylgeranyl)-sn-glycerol 1-phospholipid + 8 AH2. The catalysed reaction is 2,3-bis-O-(phytanyl)-sn-glycerol 1-phosphate + 8 A = 2,3-bis-O-(geranylgeranyl)-sn-glycerol 1-phosphate + 8 AH2. It catalyses the reaction CDP-2,3-bis-O-(geranylgeranyl)-sn-glycerol + 8 AH2 = CDP-2,3-bis-O-(phytanyl)-sn-glycerol + 8 A. It carries out the reaction archaetidylserine + 8 AH2 = 2,3-bis-O-phytanyl-sn-glycero-3-phospho-L-serine + 8 A. It participates in membrane lipid metabolism; glycerophospholipid metabolism. Its function is as follows. Is involved in the reduction of 2,3-digeranylgeranylglycerophospholipids (unsaturated archaeols) into 2,3-diphytanylglycerophospholipids (saturated archaeols) in the biosynthesis of archaeal membrane lipids. Catalyzes the formation of archaetidic acid (2,3-di-O-phytanyl-sn-glyceryl phosphate) from 2,3-di-O-geranylgeranylglyceryl phosphate (DGGGP) via the hydrogenation of each double bond of the isoprenoid chains. Is also probably able to reduce double bonds of geranyl groups in CDP-2,3-bis-O-(geranylgeranyl)-sn-glycerol and archaetidylserine, thus acting at various stages in the biosynthesis of archaeal membrane lipids. This Thermococcus gammatolerans (strain DSM 15229 / JCM 11827 / EJ3) protein is Digeranylgeranylglycerophospholipid reductase.